The following is a 210-amino-acid chain: Probable GTP-binding protein EngB (210 aa).

The region spanning 25–199 (TGIEVAFAGR…RQKLDSWFNE (175 aa)) is the EngB-type G domain. Residues 33–40 (GRSNAGKS), 60–64 (GRTQL), 78–81 (DLPG), 145–148 (TKAD), and 178–180 (FSS) each bind GTP. Residues Ser40 and Thr62 each coordinate Mg(2+).

Belongs to the TRAFAC class TrmE-Era-EngA-EngB-Septin-like GTPase superfamily. EngB GTPase family. It depends on Mg(2+) as a cofactor.

Functionally, necessary for normal cell division and for the maintenance of normal septation. The chain is Probable GTP-binding protein EngB from Klebsiella pneumoniae subsp. pneumoniae (strain ATCC 700721 / MGH 78578).